A 185-amino-acid polypeptide reads, in one-letter code: Large ribosomal subunit protein uL5 (185 aa).

It belongs to the universal ribosomal protein uL5 family. Part of the 50S ribosomal subunit; part of the 5S rRNA/L5/L18/L25 subcomplex. Contacts the 5S rRNA and the P site tRNA. Forms a bridge to the 30S subunit in the 70S ribosome.

This is one of the proteins that bind and probably mediate the attachment of the 5S RNA into the large ribosomal subunit, where it forms part of the central protuberance. In the 70S ribosome it contacts protein S13 of the 30S subunit (bridge B1b), connecting the 2 subunits; this bridge is implicated in subunit movement. Contacts the P site tRNA; the 5S rRNA and some of its associated proteins might help stabilize positioning of ribosome-bound tRNAs. The polypeptide is Large ribosomal subunit protein uL5 (Streptomyces coelicolor (strain ATCC BAA-471 / A3(2) / M145)).